Consider the following 171-residue polypeptide: uncharacterized protein (171 aa).

The protein belongs to the mimivirus L87/L94 family.

This is an uncharacterized protein from Acanthamoeba polyphaga (Amoeba).